Reading from the N-terminus, the 943-residue chain is MTDYKATLNLPSTAFPMKAGLPQREPEILQRWNSIDLYRKLRQIGEGRPKFILHDGPPYANGNIHIGHAVNKVIKDMIVRSRTLAGFDAPYVPGWDCHGLPIEHKVETTFGKNQPADLTRERCRAYAAEQIEGQKADFIRLGVLGDWDNPYKTMDFANEAGEIRALAKMVEGGFVFKGLKPVNWCFDCGSALAEAEVEYQDKKSDAIDVAFDVEDADKLAAAFGLASLAKRASIVIWTTTPWTIPANQALNVHPEFVYALVDTGERLLVLAEELVESCLQRYGLAGEIIARCEGKALELIRFRHPFYERFAPVYLADYVETGAGTGIVHSAPAYGEDDFRSCKHYGMENDDILGPVQSNGVYVSDLPFFGGQFIWKANPAIVEKLAEVGALLKHESIQHSYMHCWRHKTPLIYRATAQWFVGMDKVAHDGSSLRRRALDAIEQTEFVPAWGQARLHGMIAGRPDWCISRQRTWGVPIPFFLHKESGELHPRTVELMEQVAQRVEQGGIEAWSKLDAAELLGDEAAQYEKITDTLDVWFDSGTTHWHVMRGSHPMGHEQGPRADLYLEGSDQHRGWFHSSLLTGAAIDGHAPYKGLLTHGFTVDENGRKMSKSLGNVIAPQEITDSMGADILRLWVSATDYSGEMAVSKQILQRSADAYRRIRNTARFLLSNLDGFDPAQHMAPNDQLIALDRWAIDRALLLQREIEEAYTTYKFWNVYQKVHNFCVQELGGFYLDIIKDRQYTTGADSLPRRSCQTALYHIAEALVRWIAPILAFTAEEIWQYLPGERNESVMLNTWYEGLAELPEGFELGRPFWDKVMEVKAAVNKELENQRNAKAIGGNLQAEVTLYAEESLAGELARLGSELRFVLITSAVDIAPLAQAPAEAVDSELAGLKLLVRKTEHSKCGRCWHHLPDVGSHAEHPEICGRCVENIEGAGEVRHYA.

Residues 58–68 carry the 'HIGH' region motif; the sequence is PYANGNIHIGH. Residue Glu-567 coordinates L-isoleucyl-5'-AMP. The 'KMSKS' region motif lies at 608 to 612; it reads KMSKS. Lys-611 contacts ATP. Cys-906, Cys-909, Cys-926, and Cys-929 together coordinate Zn(2+).

Belongs to the class-I aminoacyl-tRNA synthetase family. IleS type 1 subfamily. Monomer. Requires Zn(2+) as cofactor.

The protein localises to the cytoplasm. The catalysed reaction is tRNA(Ile) + L-isoleucine + ATP = L-isoleucyl-tRNA(Ile) + AMP + diphosphate. In terms of biological role, catalyzes the attachment of isoleucine to tRNA(Ile). As IleRS can inadvertently accommodate and process structurally similar amino acids such as valine, to avoid such errors it has two additional distinct tRNA(Ile)-dependent editing activities. One activity is designated as 'pretransfer' editing and involves the hydrolysis of activated Val-AMP. The other activity is designated 'posttransfer' editing and involves deacylation of mischarged Val-tRNA(Ile). This chain is Isoleucine--tRNA ligase, found in Stutzerimonas stutzeri (strain A1501) (Pseudomonas stutzeri).